The primary structure comprises 467 residues: A-type ATP synthase subunit B (467 aa).

The interval 95–114 is disordered; that stretch reads GKGQPRDHMPLPPPEDFRDV.

It belongs to the ATPase alpha/beta chains family. As to quaternary structure, has multiple subunits with at least A(3), B(3), C, D, E, F, H, I and proteolipid K(x).

The protein resides in the cell membrane. Component of the A-type ATP synthase that produces ATP from ADP in the presence of a proton gradient across the membrane. The B chain is a regulatory subunit. This Pyrobaculum neutrophilum (strain DSM 2338 / JCM 9278 / NBRC 100436 / V24Sta) (Thermoproteus neutrophilus) protein is A-type ATP synthase subunit B.